Consider the following 225-residue polypeptide: Glucosyl-3-phosphoglycerate phosphatase (225 aa).

Residue Arg10 coordinates substrate. His11 serves as the catalytic Tele-phosphohistidine intermediate. Arg60 serves as a coordination point for substrate. Glu84 functions as the Proton donor/acceptor in the catalytic mechanism. His158 is a substrate binding site.

The protein belongs to the phosphoglycerate mutase family. Homodimer.

It carries out the reaction (2R)-2-O-(alpha-D-glucopyranosyl)-3-phospho-glycerate + H2O = (2R)-2-O-(alpha-D-glucopyranosyl)-glycerate + phosphate. Functionally, involved in the biosynthesis of mycobacterial methylglucose lipopolysaccharides (MGLP). Catalyzes the dephosphorylation of glucosyl-3-phosphoglycerate (GPG) to glucosylglycerate. The sequence is that of Glucosyl-3-phosphoglycerate phosphatase from Mycolicibacterium vanbaalenii (strain DSM 7251 / JCM 13017 / BCRC 16820 / KCTC 9966 / NRRL B-24157 / PYR-1) (Mycobacterium vanbaalenii).